Consider the following 30-residue polypeptide: Cysteine-rich venom protein okinavin (30 aa).

The segment at 1–30 is disordered; it reads SVDFDSESPRKPXIQNEIVDLHNPLRRXVN.

This sequence belongs to the CRISP family. Contains 8 disulfide bonds. Expressed by the venom gland.

Its subcellular location is the secreted. In terms of biological role, inhibits calcium-activated potassium channels (KCa), voltage-gated potassium channel (Kv), and the calcium release channel/ryanodine receptor (RyR). This Ovophis okinavensis (Ryukyu Island pit viper) protein is Cysteine-rich venom protein okinavin.